A 408-amino-acid chain; its full sequence is SERPINE1 mRNA-binding protein 1 (408 aa).

The residue at position 25 (Ser25) is a Phosphoserine. Disordered stretches follow at residues 33–292 (AAEN…TLDE) and 328–408 (SKSE…PALA). A compositionally biased stretch (low complexity) spans 51–68 (AKSAAQAAAQTNSNAAGK). Lys52 is modified (N6-acetyllysine; alternate). Lys52 participates in a covalent cross-link: Glycyl lysine isopeptide (Lys-Gly) (interchain with G-Cter in SUMO1); alternate. Lys68 bears the N6-acetyllysine mark. Composition is skewed to basic and acidic residues over residues 70–80 (LRKESQKDRKN), 89–114 (VDKK…RRPD), and 122–162 (KIID…DRPI). A Glycyl lysine isopeptide (Lys-Gly) (interchain with G-Cter in SUMO1); alternate cross-link involves residue Lys102. Lys102 is covalently cross-linked (Glycyl lysine isopeptide (Lys-Gly) (interchain with G-Cter in SUMO2); alternate). Lys122 and Lys140 each carry N6-acetyllysine. The segment covering 164-182 (GRGGLGRGRGGRGRGMGRG) has biased composition (gly residues). Residues Arg165 and Arg188 each carry the omega-N-methylarginine modification. Over residues 183–199 (DGFDSRGKREFDRHSGS) the composition is skewed to basic and acidic residues. Ser197 is subject to Phosphoserine. Ser199 carries the phosphoserine; by MTOR modification. A phosphoserine mark is found at Ser203, Ser205, and Ser208. Lys211 is subject to N6-acetyllysine; alternate. Lys211 participates in a covalent cross-link: Glycyl lysine isopeptide (Lys-Gly) (interchain with G-Cter in SUMO2); alternate. Position 216 is an omega-N-methylarginine (Arg216). Ser221 bears the Phosphoserine mark. Residue His222 forms a Glycyl lysine isopeptide (Lys-Gly) (interchain with G-Cter in SUMO2) linkage. Thr226 is subject to Phosphothreonine; by MTOR. Lys228 participates in a covalent cross-link: Glycyl lysine isopeptide (Lys-Gly) (interchain with G-Cter in SUMO1); alternate. Lys228 participates in a covalent cross-link: Glycyl lysine isopeptide (Lys-Gly) (interchain with G-Cter in SUMO2); alternate. Residue Lys228 forms a Glycyl lysine isopeptide (Lys-Gly) (interchain with G-Cter in SUMO2) linkage. Phosphoserine is present on residues Leu231, Ser234, and Tyr237. Ser234 carries the post-translational modification Phosphothreonine. Residue Lys240 is modified to Phosphothreonine. Residues 240–253 (KQISYNYSDLDQSN) show a composition bias toward polar residues. Residues 261 to 275 (GEEHHPVADTENKEN) are compositionally biased toward basic and acidic residues. Residue Lys281 forms a Glycyl lysine isopeptide (Lys-Gly) (interchain with G-Cter in SUMO1); alternate linkage. Residue Lys281 forms a Glycyl lysine isopeptide (Lys-Gly) (interchain with G-Cter in SUMO2); alternate linkage. Composition is skewed to basic and acidic residues over residues 282–292 (EEGPKEMTLDE) and 328–342 (SKSE…VMDH). Lys329 is modified (N6-acetyllysine). Ser330 carries the phosphoserine modification. Residues 363 to 372 (GRPGRGGRGG) are compositionally biased toward gly residues. 3 positions are modified to omega-N-methylarginine: Arg364, Arg367, and Arg370. 2 positions are modified to phosphoserine: Ser392 and Ser394.

It belongs to the SERBP1-HABP4 family. In terms of assembly, associates with mature 80S ribosomes. Interacts with EEF2/eEF2; interaction sequesters EEF2/eEF2 at the A-site of the ribosome, thereby blocking the interaction sites of the mRNA-tRNA complex, promoting ribosome stabilization and hibernation. Interacts with SPIN1. Interacts with CHD3 and TDRD3. Interacts with ZDHHC17 (via ANK repeats). In terms of processing, phosphorylation by MTOR inhibits SERBP1 and relieves ribosome hibernation. As to expression, expressed at high level in the heart, skeletal muscle and kidney, and at low levels in placenta, liver and brain.

It localises to the cytoplasm. The protein resides in the nucleus. It is found in the perinuclear region. Functionally, ribosome-binding protein that promotes ribosome hibernation, a process during which ribosomes are stabilized in an inactive state and preserved from proteasomal degradation. Acts via its association with EEF2/eEF2 factor, sequestering EEF2/eEF2 at the A-site of the ribosome and promoting ribosome stabilization and storage in an inactive state. May also play a role in the regulation of mRNA stability: binds to the 3'-most 134 nt of the SERPINE1/PAI1 mRNA, a region which confers cyclic nucleotide regulation of message decay. Seems to play a role in PML-nuclear bodies formation. The polypeptide is SERPINE1 mRNA-binding protein 1 (Homo sapiens (Human)).